Here is a 247-residue protein sequence, read N- to C-terminus: Probable transcriptional regulatory protein YPO2055/y2255/YP_1898 (247 aa).

The protein belongs to the TACO1 family.

The protein localises to the cytoplasm. In Yersinia pestis, this protein is Probable transcriptional regulatory protein YPO2055/y2255/YP_1898.